Reading from the N-terminus, the 378-residue chain is Fetuin-B (378 aa).

The first 18 residues, 1–18 (MGVLRLLVLCTLAACCVA), serve as a signal peptide directing secretion. Cystatin fetuin-B-type domains follow at residues 28–141 (NAPF…YNCT) and 152–261 (SMCP…VSCE). Asn40 carries N-linked (GlcNAc...) asparagine glycosylation. 5 disulfide bridges follow: Cys96–Cys107, Cys120–Cys140, Cys154–Cys157, Cys217–Cys224, and Cys237–Cys260. Residue Asn139 is glycosylated (N-linked (GlcNAc...) asparagine). 2 disordered regions span residues 266–338 (QDQV…PQGD) and 357–378 (LPFP…QRTP). The segment covering 286 to 297 (QKNTAPTSSPSI) has biased composition (polar residues). O-linked (GalNAc...) threonine glycans are attached at residues Thr289 and Thr292. Ser316 is modified (phosphoserine). Residues 362–378 (KEQRSPECPGPEKQRTP) show a composition bias toward basic and acidic residues.

The protein belongs to the fetuin family. Liver.

The protein resides in the secreted. Protease inhibitor required for egg fertilization. Required to prevent premature zona pellucida hardening before fertilization, probably by inhibiting the protease activity of ASTL, a protease that mediates the cleavage of ZP2 and triggers zona pellucida hardening. In Rattus norvegicus (Rat), this protein is Fetuin-B (Fetub).